Reading from the N-terminus, the 314-residue chain is Methionyl-tRNA formyltransferase (314 aa).

Position 113–116 (113–116 (SILP)) interacts with (6S)-5,6,7,8-tetrahydrofolate.

This sequence belongs to the Fmt family.

The enzyme catalyses L-methionyl-tRNA(fMet) + (6R)-10-formyltetrahydrofolate = N-formyl-L-methionyl-tRNA(fMet) + (6S)-5,6,7,8-tetrahydrofolate + H(+). In terms of biological role, attaches a formyl group to the free amino group of methionyl-tRNA(fMet). The formyl group appears to play a dual role in the initiator identity of N-formylmethionyl-tRNA by promoting its recognition by IF2 and preventing the misappropriation of this tRNA by the elongation apparatus. This is Methionyl-tRNA formyltransferase from Photobacterium profundum (strain SS9).